Consider the following 278-residue polypeptide: Elongation factor Ts (278 aa).

The tract at residues 82–85 (TDFV) is involved in Mg(2+) ion dislocation from EF-Tu.

The protein belongs to the EF-Ts family.

Its subcellular location is the cytoplasm. Functionally, associates with the EF-Tu.GDP complex and induces the exchange of GDP to GTP. It remains bound to the aminoacyl-tRNA.EF-Tu.GTP complex up to the GTP hydrolysis stage on the ribosome. The sequence is that of Elongation factor Ts from Streptomyces griseus subsp. griseus (strain JCM 4626 / CBS 651.72 / NBRC 13350 / KCC S-0626 / ISP 5235).